The following is a 393-amino-acid chain: Bone morphogenetic protein 2 (393 aa).

Residues 1-19 form the signal peptide; sequence MVAGTRCLLVLLLPQVLLG. A propeptide spans 20-279 (cleaved by PCSK5); that stretch reads GAAGLIPELG…GHPLHKREKR (260 aa). The residue at position 85 (Ser-85) is a Phosphoserine. N-linked (GlcNAc...) asparagine glycosylation is found at Asn-133, Asn-161, and Asn-197. The tract at residues 268 to 290 is disordered; that stretch reads GKGHPLHKREKRQAKHKQRKRLK. The span at 271–290 shows a compositional bias: basic residues; the sequence is HPLHKREKRQAKHKQRKRLK. 3 disulfides stabilise this stretch: Cys-293–Cys-358, Cys-322–Cys-390, and Cys-326–Cys-392. Asn-335 is a glycosylation site (N-linked (GlcNAc...) asparagine).

It belongs to the TGF-beta family. Homodimer; disulfide-linked. Interacts with SOSTDC1. Interacts with GREM2, RGMA, RGMB and RGMC. Interacts with ASPN. Interacts with MAFP5. Interacts with FBN1 (via N-terminal domain) and FBN2. Interacts with type I receptor BMPR1A. Interacts with type II receptor BMPR2. Interacts with SCUBE3. Interacts with TNFAIP6 (primarily via Link domain); this interaction is inhibited by hyaluronan. Interacts with ERFE. Interacts with BMPR1A/ALK3; the interaction may induce HAMP expression. Forms heterodimers with BMP6 in vitro; the heterodimer then binds to its receptor BMPR1A /ALK3 and may induce HAMP expression. Interacts with TGFBR3. As to expression, expressed in femur, calvaria, trachea, lung and ovary.

The protein resides in the secreted. Functionally, growth factor of the TGF-beta superfamily that plays essential roles in many developmental processes, including cardiogenesis, neurogenesis, and osteogenesis. Induces cartilage and bone formation. Initiates the canonical BMP signaling cascade by associating with type I receptor BMPR1A and type II receptor BMPR2. Once all three components are bound together in a complex at the cell surface, BMPR2 phosphorylates and activates BMPR1A. In turn, BMPR1A propagates signal by phosphorylating SMAD1/5/8 that travel to the nucleus and act as activators and repressors of transcription of target genes. Also acts to promote expression of HAMP, via the interaction with its receptor BMPR1A/ALK3. Can also signal through non-canonical pathways such as ERK/MAP kinase signaling cascade that regulates osteoblast differentiation. Also stimulates the differentiation of myoblasts into osteoblasts via the EIF2AK3-EIF2A-ATF4 pathway by stimulating EIF2A phosphorylation which leads to increased expression of ATF4 which plays a central role in osteoblast differentiation. Acts as a positive regulator of odontoblast differentiation during mesenchymal tooth germ formation, expression is repressed during the bell stage by MSX1-mediated inhibition of CTNNB1 signaling. The protein is Bone morphogenetic protein 2 (Bmp2) of Rattus norvegicus (Rat).